The primary structure comprises 444 residues: COP9 signalosome complex subunit 2 (444 aa).

Positions 1-31 are disordered; the sequence is MSDNDDDFMCDDDEDYGLEYSEDSNSEPDVD. The PCI domain occupies 255 to 417; it reads AHTDFFEAFK…QVLQLDKINS (163 aa).

This sequence belongs to the CSN2 family. In terms of assembly, component of the CSN complex, probably composed of CSN1b, alien/CSN2, CSN3, CSN4, CSN5, CSN6, CSN7 and CSN8. Interacts with Rpn6. In terms of tissue distribution, expressed during embryonic stages 11-14 in the muscle attachment sites (apodemes); pharynx attachment to the roof of the mouth and in the epidermis of the head for the dorsal and ventral prothoracic pharyngeal muscle attachment. From stage 16 onwards expression is seen in all thoracic and abdominal apodemes.

The protein localises to the cytoplasm. The protein resides in the nucleus. Component of the COP9 signalosome complex (CSN), a complex involved in various cellular and developmental processes. The CSN complex is an essential regulator of the ubiquitin (Ubl) conjugation pathway by mediating the deneddylation of the cullin subunits of the SCF-type E3 ligase complexes, leading to decrease the Ubl ligase activity of SCF. The CSN complex plays an essential role in oogenesis and embryogenesis and is required for proper photoreceptor R cell differentiation and promote lamina glial cell migration or axon targeting. It also promotes Ubl-dependent degradation of cyclin E (CycE) during early oogenesis. This chain is COP9 signalosome complex subunit 2, found in Drosophila melanogaster (Fruit fly).